Reading from the N-terminus, the 836-residue chain is MDHNSPKSRRSRKPEPKPDIYSTFVVHSDSDSDQGRDRDKRKAKPEEDENVDLYATMVYKGDSDGEGEEDDDDDSMLPPLLKRLPKDFGGGASLDYDDDDGDESGDFGTMIVKTDRSSHSKKNSPYSSKPRMGVSPRRRARGGDEESSDEEDEEEDDDDDDGDYGTFVVKSKDKKGKKKDKEIDMTTMGRAVASMQKSNFGGKTRKLDPSSSSSKLHGEDNRKMQQQNSKMSTTSLPDSITREDPTTKYEFLNELGKGSYGSVYKARDLKTSEIVAVKVISLTEGEEGYEEIRGEIEMLQQCNHPNVVRYLGSYQGEDYLWIVMEYCGGGSVADLMNVTEEALEEYQIAYICREALKGLAYLHSIYKVHRDIKGGNILLTEQGEVKLGDFGVAAQLTRTMSKRNTFIGTPHWMAPEVIQENRYDGKVDVWALGVSAIEMAEGLPPRSSVHPMRVLFMISIEPAPMLEDKEKWSLVFHDFVAKCLTKEPRLRPTAAEMLKHKFVERCKTGASAMSPKIEKSRQIRATMALQAQSVVAPSLEDTSTLGPKSSEELGITVPSKPPQNSTEAPLTSTLNRQHITGNTVLAGEGGDFGTMIVHGEDETEESDSRSQLVREKESSSSQFEGVPREFPGEELPDSWIHDKKKPPAIDLPVEASISQSMQASSSHEHRTKLHNIAGTQMEGGSDASGSTLKNETVGRKAFALQDKLWSIYAAGNTVPIPFLRATDISPIALLSENMIGGMQQDGNGTVAVEALQELFTSSDPQSKKGRRGQNEMPLPPSVYQRLTTSSSLMNLAQVLAYHRACYEEMPLQELQATQEQQTIQNLCDTLRTILRL.

Basic residues predominate over residues Met-1 to Arg-12. A disordered region spans residues Met-1–Asp-244. Basic and acidic residues predominate over residues Ser-28–Lys-40. Composition is skewed to acidic residues over residues Asp-64 to Ser-75, Asp-95 to Gly-105, and Glu-145 to Asp-163. Positions Met-224 to Asp-238 are enriched in polar residues. In terms of domain architecture, Protein kinase spans Tyr-249–Val-503. Residues Leu-255–Val-263 and Lys-278 contribute to the ATP site. Catalysis depends on Asp-371, which acts as the Proton acceptor. Disordered regions lie at residues Leu-539–Thr-571, Glu-600–Ile-640, and Thr-760–Pro-780. Residues Pro-562–Thr-571 are compositionally biased toward polar residues. The segment covering Ser-606–Ser-618 has biased composition (basic and acidic residues).

Belongs to the protein kinase superfamily. STE Ser/Thr protein kinase family. STE20 subfamily. Interacts with MOB1A and MOB1B via its N-terminal region at the plasma membrane and in the nucleus. Binds to BIK1 to phosphorylate and stabilize it. Interacts with and phosphorylates RBOHD upon flagellin perception to activate it. Mn(2+) serves as cofactor. Autophosphorylates. Mostly expressed in mature tissues of roots, shoots, hypocotyls, cotyledons, stems, leaves and flowers, as well as in the shoot apical meristem (SAM).

The protein localises to the cell membrane. It localises to the nucleus. Its subcellular location is the golgi apparatus. It is found in the trans-Golgi network. The protein resides in the early endosome. The enzyme catalyses L-seryl-[protein] + ATP = O-phospho-L-seryl-[protein] + ADP + H(+). It carries out the reaction L-threonyl-[protein] + ATP = O-phospho-L-threonyl-[protein] + ADP + H(+). In terms of biological role, serine/threonine-protein kinase. Regulates organ size in coordination with MOB1A by modulating cell proliferation and cell expansion, possibly by facilitating cell cycle exit. Positive regulator of the pathogen-associated molecular pattern (PAMP, e.g. flg22)-triggered immunity (PTI) signaling by stabilizing BIK1 and activating RBOHD by phosphorylation to promote the extracellular reactive oxygen species (ROS) burst involved in defense responses to bacterial infection. This chain is Serine/threonine-protein kinase 1, found in Arabidopsis thaliana (Mouse-ear cress).